The chain runs to 419 residues: BTB/POZ domain-containing protein KCTD20 (419 aa).

Positions glutamate 117–aspartate 191 constitute a BTB domain.

As to quaternary structure, interacts with AKT1; AKT2 and AKT3. Associates with PP2CA. Part of a complex containing MARK4.

The protein resides in the cytoplasm. In terms of biological role, promotes the phosphorylation of AKT family members. The sequence is that of BTB/POZ domain-containing protein KCTD20 (KCTD20) from Homo sapiens (Human).